The following is a 49-amino-acid chain: Small, acid-soluble spore protein O (49 aa).

Residues 24–49 (GYNEEFSNEPLTEAQRQNNKKRKKNQ) form a disordered region.

This sequence belongs to the SspO family.

It is found in the spore core. The chain is Small, acid-soluble spore protein O from Geobacillus kaustophilus (strain HTA426).